The primary structure comprises 301 residues: uncharacterized protein (301 aa).

A signal peptide spans 1–22 (MPGRFTVALVIALGGTCGVADA). Residues 31–300 (PMIVAHRAGT…DSPLAAQQWR (270 aa)) enclose the GP-PDE domain.

This is an uncharacterized protein from Mycobacterium tuberculosis (strain ATCC 25618 / H37Rv).